Consider the following 117-residue polypeptide: MAAKKANKKPVRYRMHVKKGDTVQVIAGSDKAKVGEVLAVFPKTSQVIVKGVNLKTKHLKPRQEGESGQIITKEAPIHSCKVMLYSTKQNVASRICYTYTEDGRKVRMLKKTGEIID.

Belongs to the universal ribosomal protein uL24 family. Part of the 50S ribosomal subunit.

One of two assembly initiator proteins, it binds directly to the 5'-end of the 23S rRNA, where it nucleates assembly of the 50S subunit. Functionally, one of the proteins that surrounds the polypeptide exit tunnel on the outside of the subunit. The chain is Large ribosomal subunit protein uL24 from Thermosynechococcus vestitus (strain NIES-2133 / IAM M-273 / BP-1).